Consider the following 115-residue polypeptide: Vitelline membrane protein Vm32E (115 aa).

Residues Met1–Ala17 form the signal peptide. Residues Gly35 to Thr72 enclose the VM domain.

Belongs to the vitelline membrane family.

The protein resides in the secreted. In terms of biological role, major early eggshell protein. This chain is Vitelline membrane protein Vm32E, found in Drosophila yakuba (Fruit fly).